We begin with the raw amino-acid sequence, 286 residues long: Transcription initiation factor IIA large subunit (286 aa).

Disordered stretches follow at residues 120–145, 167–195, and 208–236; these read NTVEATNNSGATLNTNTSGNTNADVT, TVENIDDESEKKDDEEKEEDVEKTRKEKE, and KRSALLDTDEVGSELDDSDDDYLISEGEE. Positions 175 to 195 are enriched in basic and acidic residues; it reads SEKKDDEEKEEDVEKTRKEKE. Positions 214 to 236 are enriched in acidic residues; that stretch reads DTDEVGSELDDSDDDYLISEGEE.

Belongs to the TFIIA subunit 1 family. As to quaternary structure, TFIIA is a heterodimer composed of the large TOA1 and a small TOA2 subunits. Interacts with KAP122.

The protein localises to the cytoplasm. It is found in the nucleus. TFIIA is a component of the transcription machinery of RNA polymerase II and implicated in the regulation of basal transcription. Interacts with TBP (the TATA-binding protein). The polypeptide is Transcription initiation factor IIA large subunit (TOA1) (Saccharomyces cerevisiae (strain ATCC 204508 / S288c) (Baker's yeast)).